Here is an 88-residue protein sequence, read N- to C-terminus: Small ribosomal subunit protein uS15 (88 aa).

The protein belongs to the universal ribosomal protein uS15 family. In terms of assembly, part of the 30S ribosomal subunit. Forms a bridge to the 50S subunit in the 70S ribosome, contacting the 23S rRNA.

In terms of biological role, one of the primary rRNA binding proteins, it binds directly to 16S rRNA where it helps nucleate assembly of the platform of the 30S subunit by binding and bridging several RNA helices of the 16S rRNA. Functionally, forms an intersubunit bridge (bridge B4) with the 23S rRNA of the 50S subunit in the ribosome. This chain is Small ribosomal subunit protein uS15, found in Variovorax paradoxus (strain S110).